Consider the following 140-residue polypeptide: MAENREPRGAVEAELDPVEYTLRKRLPSRLPRRPNDIYVNMKTDFKAQLARCQKLLDGGARGQNACSEIYIHGLGLAINRAINIALQLQAGSFGSLQVAANTSTVELVDELEPETDTREPLTRIRNNSAIHIRVFRVTPK.

Belongs to the histone-like Alba family. As to quaternary structure, component of nuclear RNase P and RNase MRP complexes. RNase P consists of a catalytic RNA moiety and 10 different protein chains; POP1, POP4, POP5, POP7, RPP14, RPP21, RPP25, RPP30, RPP38 and RPP40. Within the RNase P complex, POP1, POP7 and RPP25 form the 'finger' subcomplex, POP5, RPP14, RPP40 and homodimeric RPP30 form the 'palm' subcomplex, and RPP21, POP4 and RPP38 form the 'wrist' subcomplex. All subunits of the RNase P complex interact with the catalytic RNA. Several subunits of RNase P are also part of the RNase MRP complex. RNase MRP consists of a catalytic RNA moiety and about 8 protein subunits; POP1, POP7, RPP25, RPP30, RPP38, RPP40 and possibly also POP4 and POP5. Interacts with SMN1. POP7 forms a heterodimer with RPP25 that binds to the P3 stem loop of the catalytic RNA.

The protein resides in the nucleus. It is found in the nucleolus. The protein localises to the cytoplasm. Its subcellular location is the cytoplasmic granule. In terms of biological role, component of ribonuclease P, a ribonucleoprotein complex that generates mature tRNA molecules by cleaving their 5'-ends. Also a component of the MRP ribonuclease complex, which cleaves pre-rRNA sequences. The protein is Ribonuclease P protein subunit p20 (POP7) of Homo sapiens (Human).